The chain runs to 531 residues: Peptide chain release factor 3 (531 aa).

The 270-residue stretch at 13–282 (AKRRTFAIIS…TLIEHAPPPK (270 aa)) folds into the tr-type G domain. GTP-binding positions include 22–29 (SHPDAGKT), 90–94 (DTPGH), and 144–147 (NKLD).

The protein belongs to the TRAFAC class translation factor GTPase superfamily. Classic translation factor GTPase family. PrfC subfamily.

It is found in the cytoplasm. Its function is as follows. Increases the formation of ribosomal termination complexes and stimulates activities of RF-1 and RF-2. It binds guanine nucleotides and has strong preference for UGA stop codons. It may interact directly with the ribosome. The stimulation of RF-1 and RF-2 is significantly reduced by GTP and GDP, but not by GMP. The chain is Peptide chain release factor 3 from Psychrobacter sp. (strain PRwf-1).